The primary structure comprises 312 residues: Gamma-soluble NSF attachment protein (312 aa).

A disordered region spans residues 281 to 312; that stretch reads KKKSPATPQAKPDGAAGMAAEEEEDEYSGGLC. Serine 284 carries the phosphoserine modification. Threonine 287 carries the phosphothreonine modification. Residues 300–312 show a composition bias toward acidic residues; the sequence is AEEEEDEYSGGLC. Position 308 is a phosphoserine (serine 308).

Belongs to the SNAP family. In terms of assembly, interacts with RAB11FIP5. Interacts with VTI1A. In terms of tissue distribution, abundantly expressed in the heart, liver and kidneys with lower expression in the brain, spleen, lung, muscle and testes.

It localises to the membrane. It is found in the golgi apparatus. Functionally, required for vesicular transport between the endoplasmic reticulum and the Golgi apparatus. The polypeptide is Gamma-soluble NSF attachment protein (Mus musculus (Mouse)).